A 353-amino-acid chain; its full sequence is Photosystem II D2 protein (353 aa).

The residue at position 2 (T2) is an N-acetylthreonine. T2 is subject to Phosphothreonine. Residues 41 to 61 (CAYFALGGWFTGTTFVTSWYT) form a helical membrane-spanning segment. Residue H118 coordinates chlorophyll a. The helical transmembrane segment at 125–141 (GFMLRQFELARSVQLRP) threads the bilayer. Pheophytin a is bound by residues Q130 and N143. A helical membrane pass occupies residues 153–166 (VFVSVFLIYPLGQS). H198 contacts chlorophyll a. The chain crosses the membrane as a helical span at residues 208–228 (AALLCAIHGATVENTLFEDGD). H215 and F262 together coordinate a plastoquinone. H215 contributes to the Fe cation binding site. H269 contributes to the Fe cation binding site. A helical membrane pass occupies residues 279 to 295 (GLWMSALGVVGLALNLR).

The protein belongs to the reaction center PufL/M/PsbA/D family. In terms of assembly, PSII is composed of 1 copy each of membrane proteins PsbA, PsbB, PsbC, PsbD, PsbE, PsbF, PsbH, PsbI, PsbJ, PsbK, PsbL, PsbM, PsbT, PsbX, PsbY, PsbZ, Psb30/Ycf12, at least 3 peripheral proteins of the oxygen-evolving complex and a large number of cofactors. It forms dimeric complexes. The cofactor is The D1/D2 heterodimer binds P680, chlorophylls that are the primary electron donor of PSII, and subsequent electron acceptors. It shares a non-heme iron and each subunit binds pheophytin, quinone, additional chlorophylls, carotenoids and lipids. There is also a Cl(-1) ion associated with D1 and D2, which is required for oxygen evolution. The PSII complex binds additional chlorophylls, carotenoids and specific lipids..

Its subcellular location is the plastid. The protein resides in the chloroplast thylakoid membrane. It carries out the reaction 2 a plastoquinone + 4 hnu + 2 H2O = 2 a plastoquinol + O2. Photosystem II (PSII) is a light-driven water:plastoquinone oxidoreductase that uses light energy to abstract electrons from H(2)O, generating O(2) and a proton gradient subsequently used for ATP formation. It consists of a core antenna complex that captures photons, and an electron transfer chain that converts photonic excitation into a charge separation. The D1/D2 (PsbA/PsbD) reaction center heterodimer binds P680, the primary electron donor of PSII as well as several subsequent electron acceptors. D2 is needed for assembly of a stable PSII complex. In Phaseolus vulgaris (Kidney bean), this protein is Photosystem II D2 protein.